A 193-amino-acid chain; its full sequence is Xanthine phosphoribosyltransferase (193 aa).

Xanthine-binding residues include Leu-20 and Thr-27. Position 128–132 (128–132) interacts with 5-phospho-alpha-D-ribose 1-diphosphate; sequence ANGQA. Lys-156 serves as a coordination point for xanthine.

The protein belongs to the purine/pyrimidine phosphoribosyltransferase family. Xpt subfamily. In terms of assembly, homodimer.

It localises to the cytoplasm. The catalysed reaction is XMP + diphosphate = xanthine + 5-phospho-alpha-D-ribose 1-diphosphate. Its pathway is purine metabolism; XMP biosynthesis via salvage pathway; XMP from xanthine: step 1/1. Functionally, converts the preformed base xanthine, a product of nucleic acid breakdown, to xanthosine 5'-monophosphate (XMP), so it can be reused for RNA or DNA synthesis. The protein is Xanthine phosphoribosyltransferase of Streptococcus gordonii (strain Challis / ATCC 35105 / BCRC 15272 / CH1 / DL1 / V288).